Here is a 344-residue protein sequence, read N- to C-terminus: Selenide, water dikinase (344 aa).

Residue C16 is part of the active site. ATP contacts are provided by residues K19 and 47-49 (SRD). D50 contributes to the Mg(2+) binding site. Residues D67, D90, and 138–140 (GHS) each bind ATP. D90 lines the Mg(2+) pocket. Residue D226 participates in Mg(2+) binding.

It belongs to the selenophosphate synthase 1 family. Class I subfamily. In terms of assembly, homodimer. Mg(2+) serves as cofactor.

It catalyses the reaction hydrogenselenide + ATP + H2O = selenophosphate + AMP + phosphate + 2 H(+). Functionally, synthesizes selenophosphate from selenide and ATP. This is Selenide, water dikinase from Pseudomonas aeruginosa (strain ATCC 15692 / DSM 22644 / CIP 104116 / JCM 14847 / LMG 12228 / 1C / PRS 101 / PAO1).